The following is a 131-amino-acid chain: Small ribosomal subunit protein uS8 (131 aa).

This sequence belongs to the universal ribosomal protein uS8 family. In terms of assembly, part of the 30S ribosomal subunit. Contacts proteins S5 and S12.

One of the primary rRNA binding proteins, it binds directly to 16S rRNA central domain where it helps coordinate assembly of the platform of the 30S subunit. This Campylobacter fetus subsp. fetus (strain 82-40) protein is Small ribosomal subunit protein uS8.